Consider the following 125-residue polypeptide: Holo-[acyl-carrier-protein] synthase (125 aa).

2 residues coordinate Mg(2+): glutamate 9 and glutamine 58.

It belongs to the P-Pant transferase superfamily. AcpS family. Requires Mg(2+) as cofactor.

It is found in the cytoplasm. It catalyses the reaction apo-[ACP] + CoA = holo-[ACP] + adenosine 3',5'-bisphosphate + H(+). Its function is as follows. Transfers the 4'-phosphopantetheine moiety from coenzyme A to a Ser of acyl-carrier-protein. The protein is Holo-[acyl-carrier-protein] synthase of Rhodopirellula baltica (strain DSM 10527 / NCIMB 13988 / SH1).